The chain runs to 28 residues: Conotoxin Cl6a (28 aa).

Cystine bridges form between C3–C13, C7–C19, and C12–C24.

In terms of tissue distribution, expressed by the venom duct.

The protein resides in the secreted. The sequence is that of Conotoxin Cl6a from Californiconus californicus (California cone).